Here is a 419-residue protein sequence, read N- to C-terminus: Transcription termination factor Rho (419 aa).

A Rho RNA-BD domain is found at 48 to 123 (DIFGDGVLEI…LKVNKVNYDK (76 aa)). RNA-binding stretches follow at residues 61–66 (GFGFLR), 78–80 (DIY), and 108–110 (ERY). Residues 169–174 (GRGQRG), 181–186 (KAGKTM), and Arg212 each bind ATP. Residues 284–288 (VLTGG) form an RNA-binding 2 region.

This sequence belongs to the Rho family. As to quaternary structure, homohexamer. The homohexamer assembles into an open ring structure.

Functionally, facilitates transcription termination by a mechanism that involves Rho binding to the nascent RNA, activation of Rho's RNA-dependent ATPase activity, and release of the mRNA from the DNA template. The sequence is that of Transcription termination factor Rho from Buchnera aphidicola subsp. Baizongia pistaciae (strain Bp).